We begin with the raw amino-acid sequence, 207 residues long: ATP-dependent Clp protease proteolytic subunit (207 aa).

Residues 1-14 (MSYSGERDNLAPHM) constitute a propeptide that is removed on maturation. Serine 111 (nucleophile) is an active-site residue. Histidine 136 is a catalytic residue.

The protein belongs to the peptidase S14 family. In terms of assembly, fourteen ClpP subunits assemble into 2 heptameric rings which stack back to back to give a disk-like structure with a central cavity, resembling the structure of eukaryotic proteasomes. Component of the ClpAP and ClpXP complexes.

The protein localises to the cytoplasm. It carries out the reaction Hydrolysis of proteins to small peptides in the presence of ATP and magnesium. alpha-casein is the usual test substrate. In the absence of ATP, only oligopeptides shorter than five residues are hydrolyzed (such as succinyl-Leu-Tyr-|-NHMec, and Leu-Tyr-Leu-|-Tyr-Trp, in which cleavage of the -Tyr-|-Leu- and -Tyr-|-Trp bonds also occurs).. In terms of biological role, cleaves peptides in various proteins in a process that requires ATP hydrolysis. Has a chymotrypsin-like activity. Plays a major role in the degradation of misfolded proteins. The protein is ATP-dependent Clp protease proteolytic subunit of Salmonella paratyphi A (strain ATCC 9150 / SARB42).